The sequence spans 444 residues: U4/U6 snRNA-associated-splicing factor PRP24 (444 aa).

Over residues 1–16 (MEYGHHARPDSKRPLD) the composition is skewed to basic and acidic residues. Residues 1 to 29 (MEYGHHARPDSKRPLDEGSPAAAGLTSKK) form a disordered region. Position 19 is a phosphoserine (S19). RRM domains lie at 41-116 (TTVL…HLTE), 117-195 (CTLW…VSNP), and 210-289 (REIM…LADK).

In terms of assembly, monomer. Interacts with U6 snRNA SNR6 and the LSM2-8 complex (small nuclear RNA); to chaperone formation of the U4/U6-U5 tri-snRNP (small nuclear ribonucleoprotein) assembly, the protein is displaced from the U4/U6 snRNP once pairing is complete.

The protein localises to the nucleus. Functions as a recycling factor of the spliceosome, a machinery that forms on each precursor-messenger RNA (pre-mRNA) and catalyzes the removal of introns. Chaperones the re-annealing of U4 and U6 snRNAs (small nuclear RNAs) released from previous rounds of splicing, an initial step in reforming the U4/U6-U5 tri-snRNP (small nuclear ribonucleoprotein) that can reassemble into another spliceosome complex; this step involves binding U6 and facilitating the unwinding of the U6 internal stem loop, followed by base-pairing of U6 to U4. This is U4/U6 snRNA-associated-splicing factor PRP24 (PRP24) from Saccharomyces cerevisiae (strain ATCC 204508 / S288c) (Baker's yeast).